Consider the following 683-residue polypeptide: U4/U6 small nuclear ribonucleoprotein Prp3 (683 aa).

A PWI domain is found at 1-87 (MALSKRELDE…HSKSSSDRSR (87 aa)). Basic and acidic residues predominate over residues 73-107 (GRSSRHSKSSSDRSRKRELKEVFGDDSEISKESSG). Residues 73–135 (GRSSRHSKSS…IPGPPSESPG (63 aa)) are disordered. Residue lysine 139 forms a Glycyl lysine isopeptide (Lys-Gly) (interchain with G-Cter in SUMO2) linkage. Residues 153–183 (IEERKKQLSFISPPTPQPKTPSSSQPERLPI) form a disordered region. Serine 164 carries the post-translational modification Phosphoserine. At threonine 167 the chain carries Phosphothreonine. Glycyl lysine isopeptide (Lys-Gly) (interchain with G-Cter in SUMO2) cross-links involve residues lysine 244 and lysine 252. The interval 416–550 (NLVEHPAQLN…VHISVYRVRN (135 aa)) is mediates interaction with SART3. Position 619 is a phosphoserine (serine 619).

In terms of assembly, component of the precatalytic spliceosome (spliceosome B complex). Component of the U4/U6-U5 tri-snRNP complex, a building block of the precatalytic spliceosome (spliceosome B complex). The U4/U6-U5 tri-snRNP complex is composed of the U4, U6 and U5 snRNAs and at least PRPF3, PRPF4, PRPF6, PRPF8, PRPF31, SNRNP200, TXNL4A, SNRNP40, SNRPB, SNRPD1, SNRPD2, SNRPD3, SNRPE, SNRPF, SNRPG, DDX23, CD2BP2, PPIH, SNU13, EFTUD2, SART1 and USP39, plus LSM2, LSM3, LSM4, LSM5, LSM6, LSM7 and LSM8. Interacts directly with PRPF4. Part of a heteromeric complex containing PPIH, PRPF3 and PRPF4 that is stable in the absence of RNA. Interacts with SART3; the interaction is direct and recruits the deubiquitinase USP4 to PRPF3. Interacts with PRPF19. Interacts ('Lys-63'-linked polyubiquitinated) with PRPF8 (via the MPN (JAB/Mov34) domain); may stabilize the U4/U6-U5 tri-snRNP complex. Interacts with ERCC6. Post-translationally, ubiquitinated. Undergoes 'Lys-63'-linked polyubiquitination by PRPF19 and deubiquitination by USP4. 'Lys-63'-linked ubiquitination increases the affinity for PRPF8 and may regulate the assembly of the U4/U6-U5 tri-snRNP complex. As to expression, highly expressed in retina, liver, kidney and blood. Detected at lower levels in heart and brain.

The protein localises to the nucleus. The protein resides in the nucleus speckle. Functionally, plays a role in pre-mRNA splicing as component of the U4/U6-U5 tri-snRNP complex that is involved in spliceosome assembly, and as component of the precatalytic spliceosome (spliceosome B complex). The sequence is that of U4/U6 small nuclear ribonucleoprotein Prp3 (PRPF3) from Homo sapiens (Human).